The following is an 843-amino-acid chain: Respiratory burst oxidase homolog protein B (843 aa).

A compositionally biased stretch (acidic residues) spans 1–10 (MREEEMESSS). Residues 1–27 (MREEEMESSSEGETNKISRCKATGSDN) are disordered. Over 1–297 (MREEEMESSS…SYFFLENWKR (297 aa)) the chain is Cytoplasmic. 2 EF-hand-like regions span residues 114–122 (AVEGKLPKS) and 148–159 (RGTTSSSITKTE). EF-hand domains lie at 171–206 (SFDDRLQIFFDMVDKNLDGRITGDEVKEIIALSASA) and 215–250 (NVDEYAALIMEELDRDNLGYIELHNLETLLLQVPSQ). Positions 184, 186, 188, 190, and 195 each coordinate Ca(2+). Serine 268 is subject to Phosphoserine. The helical transmembrane segment at 298 to 318 (IWVLTLWISICITLFTWKFLQ) threads the bilayer. Residues 319 to 383 (YKRKTVFEVM…FDDNINFHKV (65 aa)) are Extracellular-facing. Residues 336 to 495 (KGSAETLKFN…LFVIVYVLLI (160 aa)) form the Ferric oxidoreductase domain. Residues 384-404 (VAFGIAVGIGLHAISHLACDF) traverse the membrane as a helical segment. The Cytoplasmic portion of the chain corresponds to 405–439 (PRLLHAKNVEFEPMKKFFGDERPENYGWFMKGTDG). The helical transmembrane segment at 440 to 460 (WTGVTMVVLMLVAYVLAQSWF) threads the bilayer. At 461 to 482 (RRNRANLPKSLKRLTGFNAFWY) the chain is on the extracellular side. The chain crosses the membrane as a helical span at residues 483 to 503 (SHHLFVIVYVLLIVHGYFVYL). The Cytoplasmic portion of the chain corresponds to 504–511 (SKEWYHKT). The helical transmembrane segment at 512–529 (TWMYLAVPVLLYAFERLI) threads the bilayer. The Extracellular segment spans residues 530–659 (RAFRPGAKAV…PYGAPAQDYR (130 aa)). Residues 534–657 (PGAKAVKVLK…DGPYGAPAQD (124 aa)) form the FAD-binding FR-type domain. Residues 660-680 (NYDVLLLVGLGIGATPLISII) form a helical membrane-spanning segment. The Cytoplasmic portion of the chain corresponds to 681–843 (RDVLNNIKNQ…TKFEFHKENF (163 aa)).

Belongs to the RBOH (TC 5.B.1.3) family. Monomer and homodimer.

It is found in the membrane. In terms of biological role, calcium-dependent NADPH oxidase that generates superoxide. In Arabidopsis thaliana (Mouse-ear cress), this protein is Respiratory burst oxidase homolog protein B (RBOHB).